The sequence spans 298 residues: Olfactory receptor 5AK3 (298 aa).

The Extracellular portion of the chain corresponds to 1-25 (MGRGNSTEVTEFHLLGFGVQHEFQH). An N-linked (GlcNAc...) asparagine glycan is attached at Asn5. A helical membrane pass occupies residues 26-46 (VLFIVLLLIYVTSLIGNIGMI). Over 47–54 (LLIKTDSR) the chain is Cytoplasmic. Residues 55-75 (LQTPMYFFPQHLAFVDICYTS) form a helical membrane-spanning segment. The Extracellular segment spans residues 76-99 (AITPKMLQSFTEENNLITFRGCVI). Cys97 and Cys189 are disulfide-bonded. The chain crosses the membrane as a helical span at residues 100 to 120 (QFLVYATFATSDCYLLAIMAM). Residues 121-133 (DCYVAICKPLRYP) lie on the Cytoplasmic side of the membrane. Residues 134–154 (MIMSQTVYIQLVAGSYIIGSI) form a helical membrane-spanning segment. Asn155 is a glycosylation site (N-linked (GlcNAc...) asparagine). At 155–196 (NASVHTGFTFSLSFCKSNKINHFFCDGLPILALSCSNIDINI) the chain is on the extracellular side. The chain crosses the membrane as a helical span at residues 197–217 (ILDVVFVGFDLMFTELVIIFS). The Cytoplasmic segment spans residues 218–237 (YIYIMVTILKMSSTAGRKKS). Residues 238–258 (FSTCASHLTAVTIFYGTLSYM) traverse the membrane as a helical segment. At 259–271 (YLQPQSNNSQENM) the chain is on the extracellular side. N-linked (GlcNAc...) asparagine glycosylation is present at Asn265. Residues 272–292 (KVASIFYGTVIPMLNPLIYSL) form a helical membrane-spanning segment. Residues 293–298 (RNKEGK) lie on the Cytoplasmic side of the membrane.

The protein belongs to the G-protein coupled receptor 1 family.

It localises to the cell membrane. Its function is as follows. Odorant receptor. The chain is Olfactory receptor 5AK3 (OR5AK3P) from Homo sapiens (Human).